We begin with the raw amino-acid sequence, 324 residues long: IDS-like terpene synthase 3 (324 aa).

Residues D77 and D81 each contribute to the Mg(2+) site.

Belongs to the FPP/GGPP synthase family. Requires Mg(2+) as cofactor.

The enzyme catalyses (2E)-geranyl diphosphate + H2O = linalool + diphosphate. It catalyses the reaction (2E,6E)-farnesyl diphosphate + H2O = (6E)-nerolidol + diphosphate. In terms of biological role, terpene synthase that shows monoterpene synthase activity and produces linalool, using geranyl diphosphate (GPP) as substrate. Also shows sesquiterpene synthase activity as it is able to convert farnesyl diphosphate (FPP) into (E)-nerolidol. The protein is IDS-like terpene synthase 3 of Melampsora lini (Rust fungus).